Consider the following 576-residue polypeptide: Arginine--tRNA ligase (576 aa).

The 'HIGH' region signature appears at 122 to 132 (PNVAKEMHVGH).

Belongs to the class-I aminoacyl-tRNA synthetase family. In terms of assembly, monomer.

The protein resides in the cytoplasm. It catalyses the reaction tRNA(Arg) + L-arginine + ATP = L-arginyl-tRNA(Arg) + AMP + diphosphate. This is Arginine--tRNA ligase from Sodalis glossinidius (strain morsitans).